The primary structure comprises 118 residues: Phosphoribosyl-AMP cyclohydrolase (118 aa).

Position 85 (aspartate 85) interacts with Mg(2+). Cysteine 86 lines the Zn(2+) pocket. Mg(2+) contacts are provided by aspartate 87 and aspartate 89. The Zn(2+) site is built by cysteine 102 and cysteine 109.

Belongs to the PRA-CH family. As to quaternary structure, homodimer. The cofactor is Mg(2+). Zn(2+) serves as cofactor.

The protein localises to the cytoplasm. It catalyses the reaction 1-(5-phospho-beta-D-ribosyl)-5'-AMP + H2O = 1-(5-phospho-beta-D-ribosyl)-5-[(5-phospho-beta-D-ribosylamino)methylideneamino]imidazole-4-carboxamide. Its pathway is amino-acid biosynthesis; L-histidine biosynthesis; L-histidine from 5-phospho-alpha-D-ribose 1-diphosphate: step 3/9. Catalyzes the hydrolysis of the adenine ring of phosphoribosyl-AMP. This chain is Phosphoribosyl-AMP cyclohydrolase, found in Sulfurisphaera tokodaii (strain DSM 16993 / JCM 10545 / NBRC 100140 / 7) (Sulfolobus tokodaii).